Reading from the N-terminus, the 87-residue chain is Diazepam-binding inhibitor-like 5 (87 aa).

An ACB domain is found at Ser2–Cys87. Residues Tyr29–Lys33, Lys55, and Tyr74 each bind an acyl-CoA.

It belongs to the ACBP family. As to expression, testis.

The protein resides in the cytoplasm. Its function is as follows. May be involved in the energy metabolism of the mature sperm. This chain is Diazepam-binding inhibitor-like 5 (Dbil5), found in Rattus norvegicus (Rat).